The primary structure comprises 356 residues: Protein translocase subunit SecY (356 aa).

The next 8 membrane-spanning stretches (helical) occupy residues 24–44 (LFVI…IPGI), 77–97 (IFAL…LLTV), 125–145 (LVLA…MPGM), 154–174 (FAFY…LMWL), 183–203 (IGNG…PPAV), 217–237 (FLLL…VVFI), 274–294 (VIPA…ASWF), and 317–337 (YVLL…ALVF).

Belongs to the SecY/SEC61-alpha family. As to quaternary structure, component of the Sec protein translocase complex. Heterotrimer consisting of SecY, SecE and SecG subunits. The heterotrimers can form oligomers, although 1 heterotrimer is thought to be able to translocate proteins. Interacts with the ribosome. Interacts with SecDF, and other proteins may be involved. Interacts with SecA.

It localises to the cell membrane. The central subunit of the protein translocation channel SecYEG. Consists of two halves formed by TMs 1-5 and 6-10. These two domains form a lateral gate at the front which open onto the bilayer between TMs 2 and 7, and are clamped together by SecE at the back. The channel is closed by both a pore ring composed of hydrophobic SecY resides and a short helix (helix 2A) on the extracellular side of the membrane which forms a plug. The plug probably moves laterally to allow the channel to open. The ring and the pore may move independently. The sequence is that of Protein translocase subunit SecY from Buchnera aphidicola subsp. Acyrthosiphon kondoi (Acyrthosiphon kondoi symbiotic bacterium).